The sequence spans 188 residues: dCTP deaminase (188 aa).

DCTP is bound by residues 111-116, 135-137, Q156, Y170, and Q180; these read KSTYAR and TLE. Catalysis depends on E137, which acts as the Proton donor/acceptor.

This sequence belongs to the dCTP deaminase family. In terms of assembly, homotrimer.

The enzyme catalyses dCTP + H2O + H(+) = dUTP + NH4(+). It participates in pyrimidine metabolism; dUMP biosynthesis; dUMP from dCTP (dUTP route): step 1/2. Its function is as follows. Catalyzes the deamination of dCTP to dUTP. The sequence is that of dCTP deaminase from Laribacter hongkongensis (strain HLHK9).